Consider the following 102-residue polypeptide: Acid shock protein (102 aa).

A signal peptide spans 1 to 21; the sequence is MKKVLALVVAAAMGLSSAAFA. Over residues 22–41 the composition is skewed to low complexity; it reads AETATTPAPTATTTKAAPAK. Positions 22-58 are excised as a propeptide; sequence AETATTPAPTATTTKAAPAKTTHHKKQHKAAPAQKAQ. The segment at 22 to 102 is disordered; the sequence is AETATTPAPT…PAKPAAQPAA (81 aa). Over residues 80 to 90 the composition is skewed to basic residues; it reads AAKKHAKKHSH. Over residues 91 to 102 the composition is skewed to low complexity; sequence QQPAKPAAQPAA.

Belongs to the Asr family. In terms of processing, proteolytic processing gives rise to the active protein.

It localises to the periplasm. Required for growth and/or survival at acidic conditions. This chain is Acid shock protein, found in Escherichia coli O45:K1 (strain S88 / ExPEC).